The primary structure comprises 282 residues: ABC transporter I family member 21 (282 aa).

Residues Ile13–Val248 enclose the ABC transporter domain. Gly46–Thr53 provides a ligand contact to ATP.

The protein belongs to the ABC transporter superfamily. ABCI family. As to expression, expressed in root elongating zone and root meristem, as well as in elongating etiolated hypocotyls.

It localises to the cytoplasm. This Arabidopsis thaliana (Mouse-ear cress) protein is ABC transporter I family member 21 (ABCI21).